The chain runs to 53 residues: 20 kDa chaperonin (53 aa).

2 cpn-10 domain regions span residues 1-10 (YTSIKPLGDR) and 11-53 (VAEA…KITP).

This sequence belongs to the GroES chaperonin family. In terms of assembly, forms stable complexes with cpn60 in the presence of ATP. Homotetramer.

Its subcellular location is the plastid. The protein localises to the chloroplast. Its function is as follows. Seems to function only as a co-chaperone, along with cpn60, and in certain cases is essential for the discharge of biologically active proteins from cpn60. This is 20 kDa chaperonin from Populus euphratica (Euphrates poplar).